We begin with the raw amino-acid sequence, 368 residues long: UDP-N-acetylglucosamine--N-acetylmuramyl-(pentapeptide) pyrophosphoryl-undecaprenol N-acetylglucosamine transferase (368 aa).

UDP-N-acetyl-alpha-D-glucosamine-binding positions include 10–12 (TGG), N126, S200, I255, and Q300.

It belongs to the glycosyltransferase 28 family. MurG subfamily.

It localises to the cell membrane. It catalyses the reaction Mur2Ac(oyl-L-Ala-gamma-D-Glu-L-Lys-D-Ala-D-Ala)-di-trans,octa-cis-undecaprenyl diphosphate + UDP-N-acetyl-alpha-D-glucosamine = beta-D-GlcNAc-(1-&gt;4)-Mur2Ac(oyl-L-Ala-gamma-D-Glu-L-Lys-D-Ala-D-Ala)-di-trans,octa-cis-undecaprenyl diphosphate + UDP + H(+). It functions in the pathway cell wall biogenesis; peptidoglycan biosynthesis. Cell wall formation. Catalyzes the transfer of a GlcNAc subunit on undecaprenyl-pyrophosphoryl-MurNAc-pentapeptide (lipid intermediate I) to form undecaprenyl-pyrophosphoryl-MurNAc-(pentapeptide)GlcNAc (lipid intermediate II). The sequence is that of UDP-N-acetylglucosamine--N-acetylmuramyl-(pentapeptide) pyrophosphoryl-undecaprenol N-acetylglucosamine transferase from Lactobacillus helveticus (strain DPC 4571).